A 140-amino-acid polypeptide reads, in one-letter code: Arsenate reductase (140 aa).

Residue cysteine 11 is the Nucleophile; cysteine thioarsenate intermediate of the active site.

It belongs to the ArsC family.

The enzyme catalyses [glutaredoxin]-dithiol + arsenate + glutathione + H(+) = glutathionyl-S-S-[glutaredoxin] + arsenite + H2O. Involved in resistance to arsenate. Catalyzes the reduction of arsenate [As(V)] to arsenite [As(III)]. The resulting arsenite is then extruded from the cell via the aquaglyceroporin AqpS. Does not display antimonate reductase activity. The chain is Arsenate reductase from Rhizobium meliloti (strain 1021) (Ensifer meliloti).